The sequence spans 148 residues: MANVLIVYGSTTGNTAWVAETVGRDIAEAGHSVEIRDAGQVEAEGLCEGRDLVLFGCSTWGDDEIELQDDFIHLYESLEATGAGKGRAACFGCGDSSYTYFCGAVDAIEERLSGLGADIVADSLKIDGDPRTMRDDVSAWAGRVVTAL.

Residues 4-145 (VLIVYGSTTG…DVSAWAGRVV (142 aa)) form the Flavodoxin-like domain.

Belongs to the flavodoxin family. The cofactor is FMN.

Low-potential electron donor to a number of redox enzymes. The polypeptide is Flavodoxin (Nitratidesulfovibrio vulgaris (strain DSM 19637 / Miyazaki F) (Desulfovibrio vulgaris)).